An 89-amino-acid chain; its full sequence is Large ribosomal subunit protein bL27 (89 aa).

A disordered region spans residues 1–24 (MAHKKAGGSSRNGRDSDGRRLGVK).

Belongs to the bacterial ribosomal protein bL27 family.

The protein is Large ribosomal subunit protein bL27 of Azorhizobium caulinodans (strain ATCC 43989 / DSM 5975 / JCM 20966 / LMG 6465 / NBRC 14845 / NCIMB 13405 / ORS 571).